The chain runs to 393 residues: Biotin synthase, mitochondrial (393 aa).

The transit peptide at 1 to 20 (MSVSFTRSFPRAFIRSYGTV) directs the protein to the mitochondrion. Residues 81-310 (SAIQMCTLMN…ATIVRLAAGR (230 aa)) form the Radical SAM core domain. Residues C96, C100, and C103 each contribute to the [4Fe-4S] cluster site. Residues C140, C173, C233, and R305 each coordinate [2Fe-2S] cluster. Residues 366–393 (NAATPQQHVDSVAHESEKNPAAPAAEAL) are disordered.

The protein belongs to the radical SAM superfamily. Biotin synthase family. [4Fe-4S] cluster serves as cofactor. Requires [2Fe-2S] cluster as cofactor.

It localises to the mitochondrion. The enzyme catalyses (4R,5S)-dethiobiotin + (sulfur carrier)-SH + 2 reduced [2Fe-2S]-[ferredoxin] + 2 S-adenosyl-L-methionine = (sulfur carrier)-H + biotin + 2 5'-deoxyadenosine + 2 L-methionine + 2 oxidized [2Fe-2S]-[ferredoxin]. It participates in cofactor biosynthesis; biotin biosynthesis; biotin from 7,8-diaminononanoate: step 2/2. Biotin synthase; part of the cluster involved in the biosynthesis of biotin (also known as vitamin B8 or vitamin H), a water-soluble vitamin that functions as a prosthetic group of many carboxylases, such as acetyl-CoA carboxylase and pyruvate carboxylase. Catalyzes the conversion of dethiobiotin (DTB) to biotin by the insertion of a sulfur atom into dethiobiotin via a radical-based mechanism. This is Biotin synthase, mitochondrial from Emericella nidulans (strain FGSC A4 / ATCC 38163 / CBS 112.46 / NRRL 194 / M139) (Aspergillus nidulans).